We begin with the raw amino-acid sequence, 77 residues long: uncharacterized protein (77 aa).

The 70-residue stretch at 5 to 74 (SYIVQLKDSV…FEPDQEMHTM (70 aa)) folds into the Inhibitor I9 domain.

This sequence belongs to the protease inhibitor I9 family.

Its subcellular location is the cytoplasm. It localises to the nucleus. This is an uncharacterized protein from Schizosaccharomyces pombe (strain 972 / ATCC 24843) (Fission yeast).